The primary structure comprises 417 residues: Glutamate-1-semialdehyde 2,1-aminomutase (417 aa).

Lys-267 is subject to N6-(pyridoxal phosphate)lysine.

The protein belongs to the class-III pyridoxal-phosphate-dependent aminotransferase family. HemL subfamily. As to quaternary structure, homodimer. Pyridoxal 5'-phosphate serves as cofactor.

It is found in the cytoplasm. It carries out the reaction (S)-4-amino-5-oxopentanoate = 5-aminolevulinate. It participates in porphyrin-containing compound metabolism; protoporphyrin-IX biosynthesis; 5-aminolevulinate from L-glutamyl-tRNA(Glu): step 2/2. This Solibacter usitatus (strain Ellin6076) protein is Glutamate-1-semialdehyde 2,1-aminomutase.